Reading from the N-terminus, the 116-residue chain is NADH-ubiquinone oxidoreductase chain 3 (116 aa).

A run of 3 helical transmembrane segments spans residues 3 to 23 (LITT…TISF), 56 to 76 (FFLI…LLPL), and 87 to 107 (LTLI…IYEW).

Belongs to the complex I subunit 3 family.

It is found in the mitochondrion membrane. The catalysed reaction is a ubiquinone + NADH + 5 H(+)(in) = a ubiquinol + NAD(+) + 4 H(+)(out). Core subunit of the mitochondrial membrane respiratory chain NADH dehydrogenase (Complex I) that is believed to belong to the minimal assembly required for catalysis. Complex I functions in the transfer of electrons from NADH to the respiratory chain. The immediate electron acceptor for the enzyme is believed to be ubiquinone. This chain is NADH-ubiquinone oxidoreductase chain 3 (MT-ND3), found in Oncorhynchus tshawytscha (Chinook salmon).